We begin with the raw amino-acid sequence, 238 residues long: Leucyl/phenylalanyl-tRNA--protein transferase (238 aa).

Belongs to the L/F-transferase family.

The protein localises to the cytoplasm. The catalysed reaction is N-terminal L-lysyl-[protein] + L-leucyl-tRNA(Leu) = N-terminal L-leucyl-L-lysyl-[protein] + tRNA(Leu) + H(+). It catalyses the reaction N-terminal L-arginyl-[protein] + L-leucyl-tRNA(Leu) = N-terminal L-leucyl-L-arginyl-[protein] + tRNA(Leu) + H(+). The enzyme catalyses L-phenylalanyl-tRNA(Phe) + an N-terminal L-alpha-aminoacyl-[protein] = an N-terminal L-phenylalanyl-L-alpha-aminoacyl-[protein] + tRNA(Phe). In terms of biological role, functions in the N-end rule pathway of protein degradation where it conjugates Leu, Phe and, less efficiently, Met from aminoacyl-tRNAs to the N-termini of proteins containing an N-terminal arginine or lysine. This Psychromonas ingrahamii (strain DSM 17664 / CCUG 51855 / 37) protein is Leucyl/phenylalanyl-tRNA--protein transferase.